A 158-amino-acid chain; its full sequence is Regenerating islet-derived protein 4 (158 aa).

Positions 1–22 (MASRSMRLLLLLSCLAKTGVLG) are cleaved as a signal peptide. An intrachain disulfide couples C30 to C41. The region spanning 37-155 (HKSNCYGYFR…CNKRQHFLCK (119 aa)) is the C-type lectin domain. The N-linked (GlcNAc...) asparagine glycan is linked to N50. Cystine bridges form between C58-C154 and C129-C146. A carbohydrate contacts are provided by residues 98 to 103 (DPQKRQ) and 135 to 137 (NNN).

As to expression, highly expressed in the gastrointestinal tract including the duodenum, jejunum, ileum, ileocecum, appendix, descending colon, pancreas and small intestine. Weakly expressed in normal colon and stomach. Strongly expressed in most colorectal tumors than in normal colon. Preferentially expressed in mucinous tumors and in some cases neuro-endocrine tumors. Expressed in mucus-secreting cells and enterocyte-like cells. In small intestine expressed at the basal perinuclear zone of goblet cells.

It is found in the secreted. Calcium-independent lectin displaying mannose-binding specificity and able to maintain carbohydrate recognition activity in an acidic environment. May be involved in inflammatory and metaplastic responses of the gastrointestinal epithelium. The protein is Regenerating islet-derived protein 4 (REG4) of Homo sapiens (Human).